Here is a 282-residue protein sequence, read N- to C-terminus: Lipoyl synthase (282 aa).

Residues Cys-37, Cys-42, Cys-48, Cys-63, Cys-67, Cys-70, and Ser-275 each contribute to the [4Fe-4S] cluster site. Positions 49 to 264 (WSRGTATFMI…RLVGIEKGFR (216 aa)) constitute a Radical SAM core domain.

Belongs to the radical SAM superfamily. Lipoyl synthase family. It depends on [4Fe-4S] cluster as a cofactor.

The protein resides in the cytoplasm. It carries out the reaction [[Fe-S] cluster scaffold protein carrying a second [4Fe-4S](2+) cluster] + N(6)-octanoyl-L-lysyl-[protein] + 2 oxidized [2Fe-2S]-[ferredoxin] + 2 S-adenosyl-L-methionine + 4 H(+) = [[Fe-S] cluster scaffold protein] + N(6)-[(R)-dihydrolipoyl]-L-lysyl-[protein] + 4 Fe(3+) + 2 hydrogen sulfide + 2 5'-deoxyadenosine + 2 L-methionine + 2 reduced [2Fe-2S]-[ferredoxin]. It participates in protein modification; protein lipoylation via endogenous pathway; protein N(6)-(lipoyl)lysine from octanoyl-[acyl-carrier-protein]: step 2/2. Functionally, catalyzes the radical-mediated insertion of two sulfur atoms into the C-6 and C-8 positions of the octanoyl moiety bound to the lipoyl domains of lipoate-dependent enzymes, thereby converting the octanoylated domains into lipoylated derivatives. In Porphyromonas gingivalis (strain ATCC 33277 / DSM 20709 / CIP 103683 / JCM 12257 / NCTC 11834 / 2561), this protein is Lipoyl synthase.